Reading from the N-terminus, the 323-residue chain is rRNA 2'-O-methyltransferase fibrillarin (323 aa).

Residues 1–80 (MSFRPGSRGG…GARGGAKGGA (80 aa)) are disordered. The span at 7–78 (SRGGARGGRG…RGGARGGAKG (72 aa)) shows a compositional bias: gly residues. An asymmetric dimethylarginine mark is found at Arg-8, Arg-12, Arg-15, Arg-19, Arg-25, Arg-29, Arg-35, Arg-39, Arg-43, Arg-49, Arg-53, Arg-57, Arg-61, Arg-65, Arg-69, and Arg-73. Residues 175–176 (TS), 194–195 (EF), 219–220 (DA), and 239–242 (DVAQ) each bind S-adenosyl-L-methionine.

It belongs to the methyltransferase superfamily. Fibrillarin family. In terms of assembly, component of box C/D small nucleolar ribonucleoprotein (snoRNP) particles that contain SNU13, NOP1, SIK1/NOP56 and NOP58, plus a guide RNA. In terms of processing, by homology to other fibrillarins, some or all of the N-terminal domain arginines are modified to asymmetric dimethylarginine (DMA).

The protein resides in the nucleus. The protein localises to the nucleolus. It carries out the reaction L-glutaminyl-[histone H2A] + S-adenosyl-L-methionine = N(5)-methyl-L-glutaminyl-[histone H2A] + S-adenosyl-L-homocysteine + H(+). In terms of biological role, S-adenosyl-L-methionine-dependent methyltransferase that has the ability to methylate both RNAs and proteins. Involved in pre-rRNA processing. Utilizes the methyl donor S-adenosyl-L-methionine to catalyze the site-specific 2'-hydroxyl methylation of ribose moieties in pre-ribosomal RNA. Site specificity is provided by a guide RNA that base pairs with the substrate. Methylation occurs at a characteristic distance from the sequence involved in base pairing with the guide RNA. Also acts as a protein methyltransferase by mediating methylation of 'Gln-105' of histone H2A (H2AQ105me), a modification that impairs binding of the FACT complex and is specifically present at 35S ribosomal DNA locus. The polypeptide is rRNA 2'-O-methyltransferase fibrillarin (NOP1) (Candida glabrata (strain ATCC 2001 / BCRC 20586 / JCM 3761 / NBRC 0622 / NRRL Y-65 / CBS 138) (Yeast)).